We begin with the raw amino-acid sequence, 643 residues long: Threonine--tRNA ligase (643 aa).

The 61-residue stretch at methionine 1 to lysine 61 folds into the TGS domain. The interval aspartate 246–proline 539 is catalytic. The Zn(2+) site is built by cysteine 339, histidine 390, and histidine 516.

The protein belongs to the class-II aminoacyl-tRNA synthetase family. As to quaternary structure, homodimer. Zn(2+) serves as cofactor.

It localises to the cytoplasm. It carries out the reaction tRNA(Thr) + L-threonine + ATP = L-threonyl-tRNA(Thr) + AMP + diphosphate + H(+). In terms of biological role, catalyzes the attachment of threonine to tRNA(Thr) in a two-step reaction: L-threonine is first activated by ATP to form Thr-AMP and then transferred to the acceptor end of tRNA(Thr). Also edits incorrectly charged L-seryl-tRNA(Thr). The polypeptide is Threonine--tRNA ligase (Sulfurihydrogenibium sp. (strain YO3AOP1)).